The sequence spans 240 residues: uncharacterized protein (240 aa).

The signal sequence occupies residues 1 to 30 (MNKSGMSLIITMLLLIGTAIVIGAAYYAWS).

This is an uncharacterized protein from Methanocaldococcus jannaschii (strain ATCC 43067 / DSM 2661 / JAL-1 / JCM 10045 / NBRC 100440) (Methanococcus jannaschii).